A 634-amino-acid chain; its full sequence is 1-deoxy-D-xylulose-5-phosphate synthase (634 aa).

Residues His74 and 115 to 117 each bind thiamine diphosphate; that span reads AHS. Asp146 contributes to the Mg(2+) binding site. Residues 147–148, Asn176, Tyr283, and Glu365 each bind thiamine diphosphate; that span reads GA. Residue Asn176 coordinates Mg(2+).

The protein belongs to the transketolase family. DXPS subfamily. As to quaternary structure, homodimer. Mg(2+) is required as a cofactor. Thiamine diphosphate serves as cofactor.

The enzyme catalyses D-glyceraldehyde 3-phosphate + pyruvate + H(+) = 1-deoxy-D-xylulose 5-phosphate + CO2. It participates in metabolic intermediate biosynthesis; 1-deoxy-D-xylulose 5-phosphate biosynthesis; 1-deoxy-D-xylulose 5-phosphate from D-glyceraldehyde 3-phosphate and pyruvate: step 1/1. Functionally, catalyzes the acyloin condensation reaction between C atoms 2 and 3 of pyruvate and glyceraldehyde 3-phosphate to yield 1-deoxy-D-xylulose-5-phosphate (DXP). The sequence is that of 1-deoxy-D-xylulose-5-phosphate synthase from Burkholderia pseudomallei (strain 668).